The primary structure comprises 212 residues: Putative protein phosphatase 2C 53 (212 aa).

Residues 1–208 (MEDRFSAITN…DDISVMLIPL (208 aa)) form the PPM-type phosphatase domain. Asp199 lines the Mn(2+) pocket.

The protein belongs to the PP2C family. The cofactor is Mg(2+). Requires Mn(2+) as cofactor.

The enzyme catalyses O-phospho-L-seryl-[protein] + H2O = L-seryl-[protein] + phosphate. It carries out the reaction O-phospho-L-threonyl-[protein] + H2O = L-threonyl-[protein] + phosphate. The polypeptide is Putative protein phosphatase 2C 53 (Arabidopsis thaliana (Mouse-ear cress)).